The primary structure comprises 394 residues: Flap endonuclease 1 (394 aa).

Residues 1–104 are N-domain; that stretch reads MGIKQLFTII…GELARRYQRK (104 aa). Mg(2+) is bound at residue aspartate 34. The DNA site is built by arginine 47 and arginine 70. The Mg(2+) site is built by aspartate 86, glutamate 158, glutamate 160, aspartate 179, and aspartate 181. The tract at residues 122-253 is I-domain; it reads DVEKFSRRTV…STALKLIREH (132 aa). Glutamate 158 provides a ligand contact to DNA. The DNA site is built by glycine 231 and aspartate 233. Aspartate 233 contacts Mg(2+). Positions 340–348 are interaction with PCNA; that stretch reads QQQRLEGFF. Residues 358-394 form a disordered region; that stretch reads QKAHKRKLEVKAEEAKKKLKAEKKEKAKAKARPRGTA. Residues 374–394 are compositionally biased toward basic residues; sequence KKLKAEKKEKAKAKARPRGTA.

This sequence belongs to the XPG/RAD2 endonuclease family. FEN1 subfamily. As to quaternary structure, interacts with PCNA. Three molecules of FEN1 bind to one PCNA trimer with each molecule binding to one PCNA monomer. PCNA stimulates the nuclease activity without altering cleavage specificity. Mg(2+) is required as a cofactor. In terms of processing, phosphorylated. Phosphorylation upon DNA damage induces relocalization to the nuclear plasma.

It localises to the nucleus. The protein localises to the nucleolus. Its subcellular location is the nucleoplasm. It is found in the mitochondrion. Its function is as follows. Structure-specific nuclease with 5'-flap endonuclease and 5'-3' exonuclease activities involved in DNA replication and repair. During DNA replication, cleaves the 5'-overhanging flap structure that is generated by displacement synthesis when DNA polymerase encounters the 5'-end of a downstream Okazaki fragment. It enters the flap from the 5'-end and then tracks to cleave the flap base, leaving a nick for ligation. Also involved in the long patch base excision repair (LP-BER) pathway, by cleaving within the apurinic/apyrimidinic (AP) site-terminated flap. Acts as a genome stabilization factor that prevents flaps from equilibrating into structures that lead to duplications and deletions. Also possesses 5'-3' exonuclease activity on nicked or gapped double-stranded DNA, and exhibits RNase H activity. Also involved in replication and repair of rDNA and in repairing mitochondrial DNA. The chain is Flap endonuclease 1 from Pyricularia oryzae (strain 70-15 / ATCC MYA-4617 / FGSC 8958) (Rice blast fungus).